Reading from the N-terminus, the 797-residue chain is MAP/microtubule affinity-regulating kinase 3 (797 aa).

The interval 1 to 35 is disordered; the sequence is MSTRTPLPTVNERDTENHISHGDGRQEVTSRTGRS. Residues 11 to 28 are compositionally biased toward basic and acidic residues; that stretch reads NERDTENHISHGDGRQEV. The residue at position 42 (S42) is a Phosphoserine. Positions 56-307 constitute a Protein kinase domain; sequence YRLLKTIGKG…LEQIMKDRWI (252 aa). Residues 62–70 and K85 each bind ATP; that span reads IGKGNFAKV. The Proton acceptor role is filled by D178. Position 211 is a phosphothreonine; by LKB1 (T211). The UBA domain maps to 326–365; it reads ISDQKRIDIMVGMGYSQEEIQESLSKMKYDEITATYLLLG. A phosphoserine mark is found at S368, S374, S376, S380, S383, S400, S419, and S469. Disordered regions lie at residues 372-504 and 585-701; these read DASD…GMTR and PDQR…KPRS. Positions 374–385 are enriched in low complexity; it reads SDSSSSSNLSLA. The segment covering 391–400 has biased composition (polar residues); it reads SDLSNSTGQS. Polar residues-rich tracts occupy residues 492–504 and 585–602; these read VPSSNAASGGMTR and PDQRTPVASTHSISSATT. Residues S593 and S596 each carry the phosphoserine modification. T602 is subject to Phosphothreonine. A Phosphothreonine; by PKC/PRKCZ modification is found at T617. S636, S651, and S654 each carry phosphoserine. The span at 637–664 shows a compositional bias: polar residues; it reads PSLSHEATPLSQTRSRGSTNLFSKLTSK. The span at 669–678 shows a compositional bias: basic and acidic residues; that stretch reads LPTEYERNGR. S687 carries the post-translational modification Phosphoserine. Residues 689 to 699 show a composition bias toward basic and acidic residues; that stretch reads EQKDENREAKP. A KA1 domain is found at 748–797; it reads DGHAESLVQWEMEVCKLPRLSLNGVRFKRISGTSIAFKNIASKIANELKL.

This sequence belongs to the protein kinase superfamily. CAMK Ser/Thr protein kinase family. SNF1 subfamily. Interacts with MAPT/TAU. Interacts with DLG5 (via coiled-coil domain). Interacts with STK3/MST2 and STK4/MST1 in the presence of DLG5. Interacts with YWHAB, YWHAG, YWHAQ and YWHAZ. Interacts with PKP2 (via N-terminus). Interacts with CDC25C. Interacts with KSR1. Post-translationally, phosphorylated at Thr-211 by STK11/LKB1 in complex with STE20-related adapter-alpha (STRADA) pseudo kinase and CAB39. Phosphorylation at Thr-617 by PRKCZ/aPKC inhibits the kinase activity.

Its subcellular location is the cell membrane. The protein resides in the cell projection. It is found in the dendrite. It localises to the cytoplasm. It carries out the reaction L-seryl-[protein] + ATP = O-phospho-L-seryl-[protein] + ADP + H(+). It catalyses the reaction L-threonyl-[protein] + ATP = O-phospho-L-threonyl-[protein] + ADP + H(+). Activated by phosphorylation on Thr-211. Inhibited by phosphorylation on Thr-617. Its function is as follows. Serine/threonine-protein kinase. Involved in the specific phosphorylation of microtubule-associated proteins for MAP2 and MAP4. Phosphorylates the microtubule-associated protein MAPT/TAU. Phosphorylates CDC25C on 'Ser-216'. Regulates localization and activity of some histone deacetylases by mediating phosphorylation of HDAC7, promoting subsequent interaction between HDAC7 and 14-3-3 and export from the nucleus. Regulates localization and activity of MITF by mediating its phosphorylation, promoting subsequent interaction between MITF and 14-3-3 and retention in the cytosol. Negatively regulates the Hippo signaling pathway and antagonizes the phosphorylation of LATS1. Cooperates with DLG5 to inhibit the kinase activity of STK3/MST2 toward LATS1. Phosphorylates PKP2 and KSR1. The polypeptide is MAP/microtubule affinity-regulating kinase 3 (Mark3) (Rattus norvegicus (Rat)).